The following is a 103-amino-acid chain: Nucleoid-associated protein CFF8240_0066 (103 aa).

This sequence belongs to the YbaB/EbfC family. As to quaternary structure, homodimer.

It localises to the cytoplasm. The protein localises to the nucleoid. Binds to DNA and alters its conformation. May be involved in regulation of gene expression, nucleoid organization and DNA protection. The polypeptide is Nucleoid-associated protein CFF8240_0066 (Campylobacter fetus subsp. fetus (strain 82-40)).